The primary structure comprises 1407 residues: Trichohyalin (1407 aa).

Residues 1–91 (MSPLLKSIID…AQAAYYALGQ (91 aa)) form an S-100-like region. 2 consecutive EF-hand domains span residues 23–48 (CDGAVLKKKDLKILLDREFGAVLQRP) and 49–84 (HDPETVDVMLELLDRDSDGLVGFDEFCLLIFKLAQA). Ca(2+) contacts are provided by D32, D62, D64, D66, and E73. Disordered stretches follow at residues 148–172 (EEEEQRKKRERFEQHYSRQYRDKEQ), 218–237 (LREEEQQRRERREQHERALQ), 362–471 (REQA…EEEQ), 486–587 (EQLQ…ERER), 1014–1033 (REEERLRRQERDRKFREEER), 1062–1082 (KEEKQLRRQERDRKFREEEQQ), and 1313–1407 (EQFA…QYRP). Composition is skewed to basic and acidic residues over residues 362-381 (REQARERGESLTRRWQRQLE), 396-424 (RRQEEQSLRQDQERRQRQERERELEEQAR), 447-471 (SLRERQLRAEERQEQEQRFREEEEQ), and 554-587 (QREKRRQEREREYREEEKLQREEDEKRRRQERER). Over residues 1313-1376 (EQFAREEKSR…FREDQSRRQV (64 aa)) the composition is skewed to basic and acidic residues.

This sequence belongs to the S100-fused protein family. In terms of assembly, homodimer. In terms of processing, substrate of transglutaminase. Some 200 arginines are probably converted to citrullines by peptidylarginine deimidase. Found in the hard keratinizing tissues such as the inner root sheath (IRS) of hair follicles and medulla, and in the filiform papillae of dorsal tongue epithelium.

In terms of biological role, intermediate filament-associated protein that associates in regular arrays with keratin intermediate filaments (KIF) of the inner root sheath cells of the hair follicle and the granular layer of the epidermis. It later becomes cross-linked to KIF by isodipeptide bonds. It may serve as scaffold protein, together with involucrin, in the organization of the cell envelope or even anchor the cell envelope to the KIF network. It may be involved in its own calcium-dependent postsynthetic processing during terminal differentiation. The polypeptide is Trichohyalin (TCHH) (Oryctolagus cuniculus (Rabbit)).